The primary structure comprises 210 residues: N-(5'-phosphoribosyl)anthranilate isomerase (210 aa).

It belongs to the TrpF family.

It catalyses the reaction N-(5-phospho-beta-D-ribosyl)anthranilate = 1-(2-carboxyphenylamino)-1-deoxy-D-ribulose 5-phosphate. It participates in amino-acid biosynthesis; L-tryptophan biosynthesis; L-tryptophan from chorismate: step 3/5. This chain is N-(5'-phosphoribosyl)anthranilate isomerase, found in Nostoc punctiforme (strain ATCC 29133 / PCC 73102).